We begin with the raw amino-acid sequence, 288 residues long: Ribosomal RNA small subunit methyltransferase A (288 aa).

Asn18, Leu20, Gly45, Glu66, Asp91, and Asn118 together coordinate S-adenosyl-L-methionine.

Belongs to the class I-like SAM-binding methyltransferase superfamily. rRNA adenine N(6)-methyltransferase family. RsmA subfamily.

It is found in the cytoplasm. The catalysed reaction is adenosine(1518)/adenosine(1519) in 16S rRNA + 4 S-adenosyl-L-methionine = N(6)-dimethyladenosine(1518)/N(6)-dimethyladenosine(1519) in 16S rRNA + 4 S-adenosyl-L-homocysteine + 4 H(+). Specifically dimethylates two adjacent adenosines (A1518 and A1519) in the loop of a conserved hairpin near the 3'-end of 16S rRNA in the 30S particle. May play a critical role in biogenesis of 30S subunits. The chain is Ribosomal RNA small subunit methyltransferase A from Pasteurella multocida (strain Pm70).